We begin with the raw amino-acid sequence, 471 residues long: Glutamate--tRNA ligase (471 aa).

The short motif at 9-19 (PSPTGYLHVGG) is the 'HIGH' region element. Zn(2+) is bound by residues cysteine 98, cysteine 100, cysteine 125, and histidine 127. Residues 237–241 (KLSKR) carry the 'KMSKS' region motif. Lysine 240 lines the ATP pocket.

This sequence belongs to the class-I aminoacyl-tRNA synthetase family. Glutamate--tRNA ligase type 1 subfamily. Monomer. Zn(2+) is required as a cofactor.

It is found in the cytoplasm. It catalyses the reaction tRNA(Glu) + L-glutamate + ATP = L-glutamyl-tRNA(Glu) + AMP + diphosphate. Catalyzes the attachment of glutamate to tRNA(Glu) in a two-step reaction: glutamate is first activated by ATP to form Glu-AMP and then transferred to the acceptor end of tRNA(Glu). This is Glutamate--tRNA ligase from Salmonella schwarzengrund (strain CVM19633).